Reading from the N-terminus, the 293-residue chain is Nucleotide-binding protein DvMF_0424 (293 aa).

13-20 serves as a coordination point for ATP; it reads GLSGAGKS. GTP is bound at residue 65-68; sequence DLRE.

This sequence belongs to the RapZ-like family.

Displays ATPase and GTPase activities. The polypeptide is Nucleotide-binding protein DvMF_0424 (Nitratidesulfovibrio vulgaris (strain DSM 19637 / Miyazaki F) (Desulfovibrio vulgaris)).